Here is a 259-residue protein sequence, read N- to C-terminus: 5'-nucleotidase SurE (259 aa).

A divalent metal cation contacts are provided by Asp-8, Asp-9, Ser-39, and Asn-98.

Belongs to the SurE nucleotidase family. Requires a divalent metal cation as cofactor.

The protein resides in the cytoplasm. The enzyme catalyses a ribonucleoside 5'-phosphate + H2O = a ribonucleoside + phosphate. In terms of biological role, nucleotidase that shows phosphatase activity on nucleoside 5'-monophosphates. This is 5'-nucleotidase SurE from Fervidobacterium nodosum (strain ATCC 35602 / DSM 5306 / Rt17-B1).